A 68-amino-acid polypeptide reads, in one-letter code: MPQLDTSTWLITILSMILTLLIVFQLKISKFNYPLNPTMKNINKDLYTNPWETKWTKIYLPLSLPQQS.

A helical transmembrane segment spans residues 8–24; the sequence is TWLITILSMILTLLIVF. Lys54 carries the post-translational modification N6-acetyllysine; alternate. Lys54 is modified (N6-succinyllysine; alternate). Lys57 is modified (N6-acetyllysine).

The protein belongs to the ATPase protein 8 family. In terms of assembly, component of the ATP synthase complex composed at least of ATP5F1A/subunit alpha, ATP5F1B/subunit beta, ATP5MC1/subunit c (homooctomer), MT-ATP6/subunit a, MT-ATP8/subunit 8, ATP5ME/subunit e, ATP5MF/subunit f, ATP5MG/subunit g, ATP5MK/subunit k, ATP5MJ/subunit j, ATP5F1C/subunit gamma, ATP5F1D/subunit delta, ATP5F1E/subunit epsilon, ATP5PF/subunit F6, ATP5PB/subunit b, ATP5PD/subunit d, ATP5PO/subunit OSCP. ATP synthase complex consists of a soluble F(1) head domain (subunits alpha(3) and beta(3)) - the catalytic core - and a membrane F(0) domain - the membrane proton channel (subunits c, a, 8, e, f, g, k and j). These two domains are linked by a central stalk (subunits gamma, delta, and epsilon) rotating inside the F1 region and a stationary peripheral stalk (subunits F6, b, d, and OSCP). Interacts with PRICKLE3.

The protein resides in the mitochondrion membrane. Its function is as follows. Subunit 8, of the mitochondrial membrane ATP synthase complex (F(1)F(0) ATP synthase or Complex V) that produces ATP from ADP in the presence of a proton gradient across the membrane which is generated by electron transport complexes of the respiratory chain. ATP synthase complex consist of a soluble F(1) head domain - the catalytic core - and a membrane F(1) domain - the membrane proton channel. These two domains are linked by a central stalk rotating inside the F(1) region and a stationary peripheral stalk. During catalysis, ATP synthesis in the catalytic domain of F(1) is coupled via a rotary mechanism of the central stalk subunits to proton translocation. In vivo, can only synthesize ATP although its ATP hydrolase activity can be activated artificially in vitro. Part of the complex F(0) domain. This Lemur catta (Ring-tailed lemur) protein is ATP synthase F(0) complex subunit 8.